A 99-amino-acid polypeptide reads, in one-letter code: U1-theraphotoxin-Tal1a (99 aa).

A signal peptide spans 1–22 (MNTIQVIIFAVVLVLTVTVGQA). The propeptide occupies 23 to 57 (DEDSAETSLLRKLKEAEASLFGQHLEESQHSREKR). Cystine bridges form between Cys58-Cys73, Cys65-Cys78, and Cys72-Cys93. A Serine amide modification is found at Ser98.

Belongs to the neurotoxin 14 (magi-1) family. 08 (Ltx-4) subfamily. Expressed by the venom gland.

It is found in the secreted. Functionally, insecticidal toxin that shows strong lethal effects on American cockroaches (P.americana) and common mealbeetle (T.molitor). Possibly acts by blocking ion channel currents. Also shows significant analgesic effects in mice models of pain including abdominal writhing induced by acetic acid and formalin-induced paw licking tests. In addition, exerts marked inhibition of proliferation of some human tumor cell lines including C8166, Molt-4, A-549, BIU-87, T24, and Calu-6. This chain is U1-theraphotoxin-Tal1a, found in Tliltocatl albopilosus (Curlyhair tarantula).